A 486-amino-acid polypeptide reads, in one-letter code: Malonate-semialdehyde dehydrogenase 2 (486 aa).

NAD(+) is bound by residues Phe154, Lys178, Glu181, Arg182, and Ser231. The Nucleophile role is filled by Cys286. Glu386 serves as a coordination point for NAD(+).

It belongs to the aldehyde dehydrogenase family. IolA subfamily. As to quaternary structure, homotetramer.

It catalyses the reaction 3-oxopropanoate + NAD(+) + CoA + H2O = hydrogencarbonate + acetyl-CoA + NADH + H(+). The catalysed reaction is 2-methyl-3-oxopropanoate + NAD(+) + CoA + H2O = propanoyl-CoA + hydrogencarbonate + NADH + H(+). It functions in the pathway polyol metabolism; myo-inositol degradation into acetyl-CoA; acetyl-CoA from myo-inositol: step 7/7. Its function is as follows. Catalyzes the oxidation of malonate semialdehyde (MSA) and methylmalonate semialdehyde (MMSA) into acetyl-CoA and propanoyl-CoA, respectively. Is involved in a myo-inositol catabolic pathway. Bicarbonate, and not CO2, is the end-product of the enzymatic reaction. In Oceanobacillus iheyensis (strain DSM 14371 / CIP 107618 / JCM 11309 / KCTC 3954 / HTE831), this protein is Malonate-semialdehyde dehydrogenase 2.